The chain runs to 408 residues: Formate-dependent phosphoribosylglycinamide formyltransferase (408 aa).

N(1)-(5-phospho-beta-D-ribosyl)glycinamide-binding positions include Glu25 to Leu26 and Glu85. ATP is bound by residues Arg118, Lys159, Ser164–Gln169, Glu199–Val202, and Glu207. An ATP-grasp domain is found at Lys123–Leu318. Glu277 and Glu289 together coordinate Mg(2+). N(1)-(5-phospho-beta-D-ribosyl)glycinamide-binding positions include Asp296, Lys365, and Arg372 to Arg373.

Belongs to the PurK/PurT family. In terms of assembly, homodimer.

The catalysed reaction is N(1)-(5-phospho-beta-D-ribosyl)glycinamide + formate + ATP = N(2)-formyl-N(1)-(5-phospho-beta-D-ribosyl)glycinamide + ADP + phosphate + H(+). Its pathway is purine metabolism; IMP biosynthesis via de novo pathway; N(2)-formyl-N(1)-(5-phospho-D-ribosyl)glycinamide from N(1)-(5-phospho-D-ribosyl)glycinamide (formate route): step 1/1. Involved in the de novo purine biosynthesis. Catalyzes the transfer of formate to 5-phospho-ribosyl-glycinamide (GAR), producing 5-phospho-ribosyl-N-formylglycinamide (FGAR). Formate is provided by PurU via hydrolysis of 10-formyl-tetrahydrofolate. The protein is Formate-dependent phosphoribosylglycinamide formyltransferase of Corynebacterium glutamicum (strain R).